A 340-amino-acid chain; its full sequence is 4-hydroxy-3-methylbut-2-enyl diphosphate reductase (340 aa).

Cys21 contacts [4Fe-4S] cluster. (2E)-4-hydroxy-3-methylbut-2-enyl diphosphate is bound by residues His50 and His83. His50 and His83 together coordinate dimethylallyl diphosphate. His50 and His83 together coordinate isopentenyl diphosphate. A [4Fe-4S] cluster-binding site is contributed by Cys105. Position 133 (His133) interacts with (2E)-4-hydroxy-3-methylbut-2-enyl diphosphate. Residue His133 coordinates dimethylallyl diphosphate. His133 contributes to the isopentenyl diphosphate binding site. Glu135 acts as the Proton donor in catalysis. Residue Thr173 participates in (2E)-4-hydroxy-3-methylbut-2-enyl diphosphate binding. Cys203 contacts [4Fe-4S] cluster. Residues Ser231, Ser232, Asn233, and Ser276 each coordinate (2E)-4-hydroxy-3-methylbut-2-enyl diphosphate. The dimethylallyl diphosphate site is built by Ser231, Ser232, Asn233, and Ser276. 4 residues coordinate isopentenyl diphosphate: Ser231, Ser232, Asn233, and Ser276. The tract at residues 320-340 is disordered; sequence KARGEPLTRSATAGDRMNADR.

Belongs to the IspH family. It depends on [4Fe-4S] cluster as a cofactor.

It catalyses the reaction isopentenyl diphosphate + 2 oxidized [2Fe-2S]-[ferredoxin] + H2O = (2E)-4-hydroxy-3-methylbut-2-enyl diphosphate + 2 reduced [2Fe-2S]-[ferredoxin] + 2 H(+). The enzyme catalyses dimethylallyl diphosphate + 2 oxidized [2Fe-2S]-[ferredoxin] + H2O = (2E)-4-hydroxy-3-methylbut-2-enyl diphosphate + 2 reduced [2Fe-2S]-[ferredoxin] + 2 H(+). Its pathway is isoprenoid biosynthesis; dimethylallyl diphosphate biosynthesis; dimethylallyl diphosphate from (2E)-4-hydroxy-3-methylbutenyl diphosphate: step 1/1. It participates in isoprenoid biosynthesis; isopentenyl diphosphate biosynthesis via DXP pathway; isopentenyl diphosphate from 1-deoxy-D-xylulose 5-phosphate: step 6/6. Its function is as follows. Catalyzes the conversion of 1-hydroxy-2-methyl-2-(E)-butenyl 4-diphosphate (HMBPP) into a mixture of isopentenyl diphosphate (IPP) and dimethylallyl diphosphate (DMAPP). Acts in the terminal step of the DOXP/MEP pathway for isoprenoid precursor biosynthesis. The chain is 4-hydroxy-3-methylbut-2-enyl diphosphate reductase from Acidothermus cellulolyticus (strain ATCC 43068 / DSM 8971 / 11B).